A 310-amino-acid chain; its full sequence is MRKIIVGSRRSKLALTQTNWFINELKAAGAPFEFEVKEIVTKGDQILDVQLSKVGGKGLFVKEIEQALYEKEIDFAVHSMKDMPAVLPEGLVIGCIPPREDARDAFISKGHVKFSELPAGAVVGTSSLRRSAQLLTVRPDLEIKWIRGNVDTRLAKLETEEYDAIILAAAGLKRLGWSEDVVTEFLSVEDCLPAVAQGSLGIECREDDTELLDELAKLTDQLTWQEAHAERAFLAAMDGGCQVPIAGYATSNGEEITLTGLVAAPDASVVYKETVVGSDAQKIGEELATILTKQGAFDLIQRVKAEQDAK.

Residue C241 is modified to S-(dipyrrolylmethanemethyl)cysteine.

The protein belongs to the HMBS family. In terms of assembly, monomer. Dipyrromethane is required as a cofactor.

The catalysed reaction is 4 porphobilinogen + H2O = hydroxymethylbilane + 4 NH4(+). The protein operates within porphyrin-containing compound metabolism; protoporphyrin-IX biosynthesis; coproporphyrinogen-III from 5-aminolevulinate: step 2/4. Functionally, tetrapolymerization of the monopyrrole PBG into the hydroxymethylbilane pre-uroporphyrinogen in several discrete steps. This Lysinibacillus sphaericus (strain C3-41) protein is Porphobilinogen deaminase.